We begin with the raw amino-acid sequence, 145 residues long: ATP synthase epsilon chain (145 aa).

Basic and acidic residues predominate over residues 93 to 104 (AEAEKARARAQE). The tract at residues 93 to 113 (AEAEKARARAQEALKNPDASK) is disordered.

The protein belongs to the ATPase epsilon chain family. In terms of assembly, F-type ATPases have 2 components, CF(1) - the catalytic core - and CF(0) - the membrane proton channel. CF(1) has five subunits: alpha(3), beta(3), gamma(1), delta(1), epsilon(1). CF(0) has three main subunits: a, b and c.

It localises to the cell inner membrane. Functionally, produces ATP from ADP in the presence of a proton gradient across the membrane. The polypeptide is ATP synthase epsilon chain (Francisella philomiragia subsp. philomiragia (strain ATCC 25017 / CCUG 19701 / FSC 153 / O#319-036)).